The chain runs to 406 residues: Tryptophan synthase beta chain (406 aa).

K97 carries the post-translational modification N6-(pyridoxal phosphate)lysine.

The protein belongs to the TrpB family. In terms of assembly, tetramer of two alpha and two beta chains. The cofactor is pyridoxal 5'-phosphate.

It carries out the reaction (1S,2R)-1-C-(indol-3-yl)glycerol 3-phosphate + L-serine = D-glyceraldehyde 3-phosphate + L-tryptophan + H2O. Its pathway is amino-acid biosynthesis; L-tryptophan biosynthesis; L-tryptophan from chorismate: step 5/5. Its function is as follows. The beta subunit is responsible for the synthesis of L-tryptophan from indole and L-serine. This Lacticaseibacillus paracasei (strain ATCC 334 / BCRC 17002 / CCUG 31169 / CIP 107868 / KCTC 3260 / NRRL B-441) (Lactobacillus paracasei) protein is Tryptophan synthase beta chain.